The chain runs to 669 residues: Matrix metalloproteinase-15 (669 aa).

Residues 1–41 (MGSDPSAPGRPGWTGSLLGDREEAARPRLLPLLLVLLGCLG) constitute a signal peptide (or 45). Residues 42-131 (LGVAAEDAEV…KANLRRRRKR (90 aa)) constitute a propeptide that is removed on maturation. The Cysteine switch signature appears at 109-116 (PRCGVPDQ). Cys-111 contacts Zn(2+). The Extracellular segment spans residues 132 to 625 (YALTGRKWNN…QMEEVARTVN (494 aa)). A glycan (N-linked (GlcNAc...) asparagine) is linked at Asn-150. His-259 serves as a coordination point for Zn(2+). Glu-260 is a catalytic residue. Positions 263 and 269 each coordinate Zn(2+). The segment at 300–370 (QQLYGTPDGQ…RPDQYGPNIC (71 aa)) is disordered. A compositionally biased stretch (low complexity) spans 305-322 (TPDGQPQPTQPLPTVTPR). Residues 333 to 342 (RPPQPPPPGG) are compositionally biased toward pro residues. 4 Hemopexin repeats span residues 367–415 (PNIC…WRGL), 416–461 (PGDI…GLGI), 463–511 (YDRI…QGIP), and 512–559 (ASPK…FMGC). Cys-370 and Cys-559 form a disulfide bridge. A disordered region spans residues 574–593 (RPPFNPHGGAEPGADSAEGD). At Ser-589 the chain carries Phosphoserine. A helical membrane pass occupies residues 626 to 646 (VVMVLVPLLLLLCVLGLTYAL). The Cytoplasmic segment spans residues 647 to 669 (VQMQRKGAPRVLLYCKRSLQEWV).

It belongs to the peptidase M10A family. The cofactor is Zn(2+). Requires Ca(2+) as cofactor. The precursor is cleaved by a furin endopeptidase. In terms of tissue distribution, appeared to be synthesized preferentially in liver, placenta, testis, colon and intestine. Substantial amounts are also detected in pancreas, kidney, lung, heart and skeletal muscle.

The protein resides in the membrane. Endopeptidase that degrades various components of the extracellular matrix. May activate progelatinase A. The polypeptide is Matrix metalloproteinase-15 (MMP15) (Homo sapiens (Human)).